We begin with the raw amino-acid sequence, 570 residues long: Proline--tRNA ligase (570 aa).

This sequence belongs to the class-II aminoacyl-tRNA synthetase family. ProS type 1 subfamily. Homodimer.

The protein localises to the cytoplasm. It catalyses the reaction tRNA(Pro) + L-proline + ATP = L-prolyl-tRNA(Pro) + AMP + diphosphate. Functionally, catalyzes the attachment of proline to tRNA(Pro) in a two-step reaction: proline is first activated by ATP to form Pro-AMP and then transferred to the acceptor end of tRNA(Pro). As ProRS can inadvertently accommodate and process non-cognate amino acids such as alanine and cysteine, to avoid such errors it has two additional distinct editing activities against alanine. One activity is designated as 'pretransfer' editing and involves the tRNA(Pro)-independent hydrolysis of activated Ala-AMP. The other activity is designated 'posttransfer' editing and involves deacylation of mischarged Ala-tRNA(Pro). The misacylated Cys-tRNA(Pro) is not edited by ProRS. The chain is Proline--tRNA ligase from Clostridium tetani (strain Massachusetts / E88).